A 141-amino-acid polypeptide reads, in one-letter code: Lutropin subunit beta (141 aa).

Residues 1–20 (MEMLQGLLLWLLLSVAGVWA) form the signal peptide. Ser21 carries the blocked amino end (Ser) modification. 6 disulfide bridges follow: Cys29-Cys77, Cys43-Cys92, Cys46-Cys130, Cys54-Cys108, Cys58-Cys110, and Cys113-Cys120. Residue Asn33 is glycosylated (N-linked (GlcNAc...) asparagine).

It belongs to the glycoprotein hormones subunit beta family. Heterodimer of a common alpha chain and a unique beta chain which confers biological specificity to thyrotropin, lutropin, follitropin and gonadotropin.

Its subcellular location is the secreted. Promotes spermatogenesis and ovulation by stimulating the testes and ovaries to synthesize steroids. The sequence is that of Lutropin subunit beta (LHB) from Sus scrofa (Pig).